We begin with the raw amino-acid sequence, 72 residues long: uncharacterized protein (72 aa).

This is an uncharacterized protein from Haemophilus influenzae (strain ATCC 51907 / DSM 11121 / KW20 / Rd).